We begin with the raw amino-acid sequence, 526 residues long: Bifunctional purine biosynthesis protein PurH (526 aa).

An MGS-like domain is found at 1–147 (MTKIERALIS…KNWAHVAIVT (147 aa)).

This sequence belongs to the PurH family.

The enzyme catalyses (6R)-10-formyltetrahydrofolate + 5-amino-1-(5-phospho-beta-D-ribosyl)imidazole-4-carboxamide = 5-formamido-1-(5-phospho-D-ribosyl)imidazole-4-carboxamide + (6S)-5,6,7,8-tetrahydrofolate. The catalysed reaction is IMP + H2O = 5-formamido-1-(5-phospho-D-ribosyl)imidazole-4-carboxamide. It participates in purine metabolism; IMP biosynthesis via de novo pathway; 5-formamido-1-(5-phospho-D-ribosyl)imidazole-4-carboxamide from 5-amino-1-(5-phospho-D-ribosyl)imidazole-4-carboxamide (10-formyl THF route): step 1/1. The protein operates within purine metabolism; IMP biosynthesis via de novo pathway; IMP from 5-formamido-1-(5-phospho-D-ribosyl)imidazole-4-carboxamide: step 1/1. The protein is Bifunctional purine biosynthesis protein PurH of Laribacter hongkongensis (strain HLHK9).